The chain runs to 377 residues: Cell division cycle-associated protein 7 (377 aa).

2 disordered regions span residues 58–113 (RTRS…EEDG) and 144–211 (IFSG…EEDK). Low complexity predominate over residues 76–100 (PARNTRRAANTKAAPPKPSESSAND). Positions 148-173 (RHSLPGHRTKDSKSPRRRTFPGVASR) are interaction with MYC. A Nuclear localization signal motif is present at residues 163 to 179 (RRRTFPGVASRRNPERR). Threonine 166 bears the Phosphothreonine mark. Serine 193 carries the phosphoserine modification. Threonine 199 carries the post-translational modification Phosphothreonine. The segment covering 199 to 210 (TEEEEDEEEEED) has biased composition (acidic residues). A Glycyl lysine isopeptide (Lys-Gly) (interchain with G-Cter in SUMO2) cross-link involves residue lysine 211. Residue serine 220 is modified to Phosphoserine. Residues 253–377 (EEEIRNICSN…SLKQEFEMQA (125 aa)) are mediates transcriptional activity.

In terms of assembly, interacts with MYC (via C-terminus), YWHAE and YWHAZ. Post-translationally, phosphorylation at Thr-166 promotes interaction with YWHAE and YWHAZ, dissociation from MYC and sequestration in the cytoplasm.

The protein resides in the nucleus. It is found in the cytoplasm. In terms of biological role, participates in MYC-mediated cell transformation and apoptosis; induces anchorage-independent growth and clonogenicity in lymphoblastoid cells. Insufficient to induce tumorigenicity when overexpressed but contributes to MYC-mediated tumorigenesis. May play a role as transcriptional regulator. The chain is Cell division cycle-associated protein 7 (Cdca7) from Rattus norvegicus (Rat).